Consider the following 205-residue polypeptide: Small ribosomal subunit protein uS4 (205 aa).

Residues asparagine 18–serine 46 are disordered. The 61-residue stretch at arginine 94–leucine 154 folds into the S4 RNA-binding domain.

This sequence belongs to the universal ribosomal protein uS4 family. In terms of assembly, part of the 30S ribosomal subunit. Contacts protein S5. The interaction surface between S4 and S5 is involved in control of translational fidelity.

Functionally, one of the primary rRNA binding proteins, it binds directly to 16S rRNA where it nucleates assembly of the body of the 30S subunit. In terms of biological role, with S5 and S12 plays an important role in translational accuracy. The chain is Small ribosomal subunit protein uS4 from Bradyrhizobium diazoefficiens (strain JCM 10833 / BCRC 13528 / IAM 13628 / NBRC 14792 / USDA 110).